We begin with the raw amino-acid sequence, 854 residues long: Valine--tRNA ligase (854 aa).

The 'HIGH' region motif lies at 46–56 (PTVSGDLHIGH). Residues 551–555 (KMSKS) carry the 'KMSKS' region motif. Lys554 contacts ATP.

This sequence belongs to the class-I aminoacyl-tRNA synthetase family. ValS type 2 subfamily. As to quaternary structure, monomer.

The protein resides in the cytoplasm. It carries out the reaction tRNA(Val) + L-valine + ATP = L-valyl-tRNA(Val) + AMP + diphosphate. In terms of biological role, catalyzes the attachment of valine to tRNA(Val). As ValRS can inadvertently accommodate and process structurally similar amino acids such as threonine, to avoid such errors, it has a 'posttransfer' editing activity that hydrolyzes mischarged Thr-tRNA(Val) in a tRNA-dependent manner. In Orientia tsutsugamushi (strain Boryong) (Rickettsia tsutsugamushi), this protein is Valine--tRNA ligase.